Reading from the N-terminus, the 332-residue chain is Holliday junction branch migration complex subunit RuvB (332 aa).

Positions 1–182 (MKLNKNSELK…FGLILKLNYY (182 aa)) are large ATPase domain (RuvB-L). Residues L21, R22, G63, K66, T67, T68, 129 to 131 (EDY), R172, Y182, and R219 each bind ATP. T67 provides a ligand contact to Mg(2+). The interval 183–253 (SEDELELIIK…ISEIALEKLT (71 aa)) is small ATPAse domain (RuvB-S). A head domain (RuvB-H) region spans residues 256 to 332 (KNGLDDADYT…FKLFKNDKIK (77 aa)). Residues R311 and R316 each coordinate DNA.

This sequence belongs to the RuvB family. In terms of assembly, homohexamer. Forms an RuvA(8)-RuvB(12)-Holliday junction (HJ) complex. HJ DNA is sandwiched between 2 RuvA tetramers; dsDNA enters through RuvA and exits via RuvB. An RuvB hexamer assembles on each DNA strand where it exits the tetramer. Each RuvB hexamer is contacted by two RuvA subunits (via domain III) on 2 adjacent RuvB subunits; this complex drives branch migration. In the full resolvosome a probable DNA-RuvA(4)-RuvB(12)-RuvC(2) complex forms which resolves the HJ.

The protein localises to the cytoplasm. The catalysed reaction is ATP + H2O = ADP + phosphate + H(+). Functionally, the RuvA-RuvB-RuvC complex processes Holliday junction (HJ) DNA during genetic recombination and DNA repair, while the RuvA-RuvB complex plays an important role in the rescue of blocked DNA replication forks via replication fork reversal (RFR). RuvA specifically binds to HJ cruciform DNA, conferring on it an open structure. The RuvB hexamer acts as an ATP-dependent pump, pulling dsDNA into and through the RuvAB complex. RuvB forms 2 homohexamers on either side of HJ DNA bound by 1 or 2 RuvA tetramers; 4 subunits per hexamer contact DNA at a time. Coordinated motions by a converter formed by DNA-disengaged RuvB subunits stimulates ATP hydrolysis and nucleotide exchange. Immobilization of the converter enables RuvB to convert the ATP-contained energy into a lever motion, pulling 2 nucleotides of DNA out of the RuvA tetramer per ATP hydrolyzed, thus driving DNA branch migration. The RuvB motors rotate together with the DNA substrate, which together with the progressing nucleotide cycle form the mechanistic basis for DNA recombination by continuous HJ branch migration. Branch migration allows RuvC to scan DNA until it finds its consensus sequence, where it cleaves and resolves cruciform DNA. In Phytoplasma mali (strain AT), this protein is Holliday junction branch migration complex subunit RuvB.